We begin with the raw amino-acid sequence, 275 residues long: Seminase (275 aa).

Residues 1–19 (MKRLLFLFLLAGILINNHA) form the signal peptide. N-linked (GlcNAc...) asparagine glycosylation is present at asparagine 23. The 225-residue stretch at 44–268 (VIGGRVTTNA…VKPFIVKGIK (225 aa)) folds into the Peptidase S1 domain. Cysteine 70 and cysteine 86 are joined by a disulfide. Catalysis depends on charge relay system residues histidine 85 and aspartate 131. Intrachain disulfides connect cysteine 194–cysteine 210 and cysteine 220–cysteine 244. Serine 224 serves as the catalytic Charge relay system.

This sequence belongs to the peptidase S1 family. In terms of processing, undergoes cleavage in the male during mating with a cleaved product detected in the ejaculatory duct and/or bulb of males by 8-10 minutes after the start of mating. Further cleavage occurs in the mated female. In terms of tissue distribution, produced in the male accessory glands and secreted into seminal fluid.

The protein localises to the secreted. Seminal fluid protease which is required for cleavage and probably also activation of the metalloprotease Semp1. Also required for a number of female post-mating responses independent of Semp1 including egg laying and sperm usage. This chain is Seminase, found in Drosophila melanogaster (Fruit fly).